A 155-amino-acid chain; its full sequence is cAMP-dependent protein kinase type II-alpha regulatory subunit (155 aa).

The segment at 1 to 34 (SGSQDLEPSSGLVTDAIADSESEDDEDLDVPIPS) is disordered. Positions 1 to 81 (SGSQDLEPSS…LQEACKDILL (81 aa)) are dimerization and phosphorylation. The span at 18-29 (ADSESEDDEDLD) shows a compositional bias: acidic residues. Phosphoserine occurs at positions 20 and 22. S41 is modified (phosphoserine; by PKA). Residues 82–155 (FKNL…ALMY) and E150 each bind 3',5'-cyclic AMP.

It belongs to the cAMP-dependent kinase regulatory chain family. In terms of assembly, the inactive form of the enzyme is composed of two regulatory chains and two catalytic chains. Activation by cAMP produces two active catalytic monomers and a regulatory dimer that binds four cAMP molecules. Interacts with AKAP4 and CBFA2T3. Interacts with the phosphorylated form of PJA2. Interacts with MYRIP; this interaction may link PKA to components of the exocytosis machinery, thus facilitating exocytosis, including insulin release. Forms a complex composed of PRKAR2A, GSK3B and GSKIP through GSKIP interaction; facilitates PKA-induced phosphorylation and regulates GSK3B activity. Interacts with ADCY8; inhibits adenylate cyclase activity through PKA phosphorylation. Phosphorylated by the activated catalytic chain. Four types of regulatory chains are found: I-alpha, I-beta, II-alpha, and II-beta. Their expression varies among tissues and is in some cases constitutive and in others inducible.

The protein localises to the cytoplasm. The protein resides in the cell membrane. In terms of biological role, regulatory subunit of the cAMP-dependent protein kinases involved in cAMP signaling in cells. Type II regulatory chains mediate membrane association by binding to anchoring proteins, including the MAP2 kinase. This Sus scrofa (Pig) protein is cAMP-dependent protein kinase type II-alpha regulatory subunit (PRKAR2A).